The sequence spans 951 residues: MAAAAAAAAALGVRLRDCCSRGAVLLLFFSLSPRPPAAAAWLLGLRPEDTAGGRVSLEGGTLRAAEGTSFLLRVYFQPGPPVPAAPVPAPSLAPGENGTGDWAPRLVFIEEPPGAGGAAPSAVPTRPPGPQRCREQSDWASDVEVLGPLRPGGVAGSALVQVRVRELRKGEAERGGAGGGGKLFSLCAWDGRAWHHHGAAGGFLLRVRPRLYGPGGDLLPPAWLRALGALLLLALSALFSGLRLSLLSLDPVELRVLRNSGSAAEQEQARRVQAVRGRGTHLLCTLLLGQAGANAALAGWLYASLPPGVGDPGEDSGEAGVHFPWLPALVCTGAVFLGAEICPYSVCSRHGLAIASHSVCLTRLLMAAAFPVCYPLGRLLDWALRQEISTFYTREKLLETLRAADPYSDLVKEELNIIQGALELRTKVVEEVLTPLGDCFMLRSDAVLDFATVSEILRSGYTRIPVYEGDQRHNIVDILFVKDLAFVDPDDCTPLLTVTRFYNRPLHCVFNDTRLDTVLEEFKKGKSHLAIVQRVNNEGEGDPFYEVMGIVTLEDIIEEIIKSEILDETDLYTDNRKKQRVPHRERRRHDFSLFKLSDSEIRVKISPQLLLATHRFMATEVEPFKSLYLSEKILLRLLKHPNVIQELKFDERNKKAPEHYLYQRNRPVDYFVLLLQGKVEVEVGKEGLRFENGAFTYYGVPAIMTSACSDNDVRKVGSLAGSSVFLNRSPSRCSGLNRSESPNRERSDFGGSNTQLYSSSNNLYTPDYSVHILSDVQFVKITRQQYQNALTACHMDSSPQSPDMEAFTDGDSTKAPTTRGTPQTPKDDPVLTLLSNRTSLPCSRSDGLRSPGEVVYLRMEEMAFPQEEMPNFEEHRSQQVSLSPVAVPTTAASDPECCNIHLDPEASPCSSDSEENMGKKLLRTLSGRKRKKSADGERASEENSNLTPLIT.

The chain crosses the membrane as a helical span at residues 23 to 43 (AVLLLFFSLSPRPPAAAAWLL). The interval 114-138 (GAGGAAPSAVPTRPPGPQRCREQSD) is disordered. Residues 218 to 414 (LLPPAWLRAL…DPYSDLVKEE (197 aa)) form the CNNM transmembrane domain. Transmembrane regions (helical) follow at residues 222-242 (AWLR…FSGL), 282-302 (LLCT…GWLY), and 319-339 (AGVH…FLGA). CBS domains follow at residues 433 to 495 (LTPL…CTPL) and 502 to 568 (YNRP…ILDE). Composition is skewed to polar residues over residues 731–740 (SRCSGLNRSE) and 814–824 (KAPTTRGTPQT). 2 disordered regions span residues 731–754 (SRCS…GSNT) and 795–830 (MDSS…DDPV). T821 and T824 each carry phosphothreonine. S850 is modified (phosphoserine). Positions 903–951 (DPEASPCSSDSEENMGKKLLRTLSGRKRKKSADGERASEENSNLTPLIT) are disordered. Residues 920–932 (KLLRTLSGRKRKK) show a composition bias toward basic residues. Over residues 942 to 951 (ENSNLTPLIT) the composition is skewed to polar residues.

The protein belongs to the ACDP family. Predominantly expressed in brain and testis, and, at lower levels, in kidney. In the brain, expressed in hippocampal neurons (at protein level).

The protein resides in the cell membrane. In terms of biological role, probable metal transporter. The sequence is that of Metal transporter CNNM1 (Cnnm1) from Mus musculus (Mouse).